Reading from the N-terminus, the 154-residue chain is Deoxyuridine 5'-triphosphate nucleotidohydrolase (154 aa).

Residues 68-70 (RSG), Asn81, and 85-87 (TID) contribute to the substrate site.

This sequence belongs to the dUTPase family. Mg(2+) serves as cofactor.

The enzyme catalyses dUTP + H2O = dUMP + diphosphate + H(+). Its pathway is pyrimidine metabolism; dUMP biosynthesis; dUMP from dCTP (dUTP route): step 2/2. This enzyme is involved in nucleotide metabolism: it produces dUMP, the immediate precursor of thymidine nucleotides and it decreases the intracellular concentration of dUTP so that uracil cannot be incorporated into DNA. The chain is Deoxyuridine 5'-triphosphate nucleotidohydrolase from Acidiphilium cryptum (strain JF-5).